An 84-amino-acid polypeptide reads, in one-letter code: Phosphoribosylformylglycinamidine synthase subunit PurS (84 aa).

It belongs to the PurS family. In terms of assembly, homodimer or homotetramer. Part of the FGAM synthase complex composed of 1 PurL, 1 PurQ and 2 PurS subunits.

It localises to the cytoplasm. The catalysed reaction is N(2)-formyl-N(1)-(5-phospho-beta-D-ribosyl)glycinamide + L-glutamine + ATP + H2O = 2-formamido-N(1)-(5-O-phospho-beta-D-ribosyl)acetamidine + L-glutamate + ADP + phosphate + H(+). It functions in the pathway purine metabolism; IMP biosynthesis via de novo pathway; 5-amino-1-(5-phospho-D-ribosyl)imidazole from N(2)-formyl-N(1)-(5-phospho-D-ribosyl)glycinamide: step 1/2. Functionally, part of the phosphoribosylformylglycinamidine synthase complex involved in the purines biosynthetic pathway. Catalyzes the ATP-dependent conversion of formylglycinamide ribonucleotide (FGAR) and glutamine to yield formylglycinamidine ribonucleotide (FGAM) and glutamate. The FGAM synthase complex is composed of three subunits. PurQ produces an ammonia molecule by converting glutamine to glutamate. PurL transfers the ammonia molecule to FGAR to form FGAM in an ATP-dependent manner. PurS interacts with PurQ and PurL and is thought to assist in the transfer of the ammonia molecule from PurQ to PurL. In Bacillus subtilis (strain 168), this protein is Phosphoribosylformylglycinamidine synthase subunit PurS.